Reading from the N-terminus, the 634-residue chain is Polyadenylate-binding protein 1A (634 aa).

RRM domains follow at residues 11–89 (ASLY…WSQR), 99–175 (GNIF…RFKS), 191–268 (TNVY…RAQK), and 294–370 (VNLY…LAQR). The 78-residue stretch at 541–618 (QEPLTASMLA…AVAVLQAHQA (78 aa)) folds into the PABC domain.

This sequence belongs to the polyadenylate-binding protein type-1 family. In terms of assembly, interacts with ybx1; interaction recruits pabpc1a on C5-methylcytosine (m5C)-containing mRNAs, preventing their degradation.

The protein resides in the cytoplasm. Binds the poly(A) tail of mRNA. Prevents mRNA deadenylation and confers poly(A) stability. Binds to N6-methyladenosine (m6A)-containing mRNAs. Stimulates the translation of mRNAs to which it is bound, acting, at least in part, with dazl. Involved in the maternal-to-zygotic transition in early embryo via interaction with ybx1: interaction recruits pabpc1a on C5-methylcytosine (m5C)-containing maternal mRNAs, preventing their degradation. The protein is Polyadenylate-binding protein 1A of Danio rerio (Zebrafish).